A 185-amino-acid polypeptide reads, in one-letter code: Adenine phosphoribosyltransferase (185 aa).

The protein belongs to the purine/pyrimidine phosphoribosyltransferase family. As to quaternary structure, homodimer.

It localises to the cytoplasm. The catalysed reaction is AMP + diphosphate = 5-phospho-alpha-D-ribose 1-diphosphate + adenine. The protein operates within purine metabolism; AMP biosynthesis via salvage pathway; AMP from adenine: step 1/1. Catalyzes a salvage reaction resulting in the formation of AMP, that is energically less costly than de novo synthesis. The chain is Adenine phosphoribosyltransferase from Aliarcobacter butzleri (strain RM4018) (Arcobacter butzleri).